The sequence spans 181 residues: Adenine phosphoribosyltransferase (181 aa).

Belongs to the purine/pyrimidine phosphoribosyltransferase family. As to quaternary structure, homodimer.

Its subcellular location is the cytoplasm. It carries out the reaction AMP + diphosphate = 5-phospho-alpha-D-ribose 1-diphosphate + adenine. The protein operates within purine metabolism; AMP biosynthesis via salvage pathway; AMP from adenine: step 1/1. In terms of biological role, catalyzes a salvage reaction resulting in the formation of AMP, that is energically less costly than de novo synthesis. The chain is Adenine phosphoribosyltransferase from Acidobacterium capsulatum (strain ATCC 51196 / DSM 11244 / BCRC 80197 / JCM 7670 / NBRC 15755 / NCIMB 13165 / 161).